A 237-amino-acid chain; its full sequence is tRNA (guanine-N(1)-)-methyltransferase (237 aa).

Residues Gly113 and 133-138 (MGDYIL) each bind S-adenosyl-L-methionine.

This sequence belongs to the RNA methyltransferase TrmD family. In terms of assembly, homodimer.

The protein localises to the cytoplasm. The enzyme catalyses guanosine(37) in tRNA + S-adenosyl-L-methionine = N(1)-methylguanosine(37) in tRNA + S-adenosyl-L-homocysteine + H(+). Functionally, specifically methylates guanosine-37 in various tRNAs. This chain is tRNA (guanine-N(1)-)-methyltransferase, found in Wolinella succinogenes (strain ATCC 29543 / DSM 1740 / CCUG 13145 / JCM 31913 / LMG 7466 / NCTC 11488 / FDC 602W) (Vibrio succinogenes).